Here is a 327-residue protein sequence, read N- to C-terminus: Phenylalanine--tRNA ligase alpha subunit (327 aa).

A Mg(2+)-binding site is contributed by E252.

The protein belongs to the class-II aminoacyl-tRNA synthetase family. Phe-tRNA synthetase alpha subunit type 1 subfamily. Tetramer of two alpha and two beta subunits. Mg(2+) serves as cofactor.

The protein resides in the cytoplasm. The enzyme catalyses tRNA(Phe) + L-phenylalanine + ATP = L-phenylalanyl-tRNA(Phe) + AMP + diphosphate + H(+). This chain is Phenylalanine--tRNA ligase alpha subunit, found in Photobacterium profundum (strain SS9).